A 438-amino-acid polypeptide reads, in one-letter code: Alpha-methylserine aldolase (438 aa).

Position 252 is an N6-(pyridoxal phosphate)lysine (K252).

It belongs to the SHMT family. Alpha-methylserine aldolase subfamily. As to quaternary structure, homodimer. Requires pyridoxal 5'-phosphate as cofactor.

It carries out the reaction 2-methyl-L-serine = formaldehyde + L-alanine. With respect to regulation, in the alpha-methyl-L-serine synthesis reaction, activity is inhibited by an excess amount of formaldehyde (at a concentration greater than 10 mM). Its function is as follows. Catalyzes the reversible interconversion of alpha-methyl-L-serine to L-alanine and formaldehyde. Cannot use alpha-methyl-D-serine, L-serine or D-serine. Cannot use D-alanine instead of L-alanine as the substrate for alpha-methyl-L-serine synthesis. Does not require tetrahydrofolate (THF) for activity. In Ralstonia sp, this protein is Alpha-methylserine aldolase.